The chain runs to 153 residues: Arachidonate 5-lipoxygenase-activating protein (153 aa).

Over 1-8 the chain is Lumenal; the sequence is MDQEAVGN. Residues 9-30 form a helical membrane-spanning segment; that stretch reads VVLLAIVTLISVVQNGFFAHKV. Residues 31–52 lie on the Cytoplasmic side of the membrane; the sequence is EHESRNQNGRSFQRTGTLAFER. Residues 53–77 traverse the membrane as a helical segment; that stretch reads VYTANQNCVDAYPTFLAVLWTAGLL. Over 78 to 80 the chain is Lumenal; the sequence is CSQ. The chain crosses the membrane as a helical span at residues 81–102; that stretch reads VPAAFAGLMYLFVRQKYFVGYL. Residues 103–107 are Cytoplasmic-facing; the sequence is GERTQ. Residues 108–115 lie within the membrane without spanning it; sequence STPGYIFG. The helical transmembrane segment at 116-128 threads the bilayer; it reads KRIILFLFLMSLA. Residues 129–153 lie on the Lumenal side of the membrane; it reads GILNYCLILLFGSDFENYIKTISTT.

Belongs to the MAPEG family. In terms of assembly, homotrimer. Interacts with LTC4S and ALOX5.

It localises to the nucleus membrane. The protein resides in the endoplasmic reticulum membrane. Its function is as follows. Required for leukotriene biosynthesis by ALOX5 (5-lipoxygenase). Anchors ALOX5 to the membrane. Binds arachidonic acid, and could play an essential role in the transfer of arachidonic acid to ALOX5. Binds to MK-886, a compound that blocks the biosynthesis of leukotrienes. This is Arachidonate 5-lipoxygenase-activating protein (ALOX5AP) from Oryctolagus cuniculus (Rabbit).